A 116-amino-acid chain; its full sequence is Putative pterin-4-alpha-carbinolamine dehydratase (116 aa).

This sequence belongs to the pterin-4-alpha-carbinolamine dehydratase family.

The catalysed reaction is (4aS,6R)-4a-hydroxy-L-erythro-5,6,7,8-tetrahydrobiopterin = (6R)-L-erythro-6,7-dihydrobiopterin + H2O. In Stenotrophomonas maltophilia (strain K279a), this protein is Putative pterin-4-alpha-carbinolamine dehydratase.